The chain runs to 424 residues: O-methyltransferase bfoD (424 aa).

Asp275 contributes to the S-adenosyl-L-methionine binding site. The active-site Proton acceptor is the His326.

It belongs to the class I-like SAM-binding methyltransferase superfamily. Cation-independent O-methyltransferase family.

Its pathway is secondary metabolite biosynthesis. Cytochrome P450 monooxygenase; part of the gene cluster that mediates the biosynthesis of bifonsecin B, a dimeric gamma-naphthopyrone. The first step in the biosynthesis of bifonsecin B is the production of gamma-naphthopyrone precursor YWA1 by the non-reducing polyketide synthase albA, via condensation of one acetyl-CoA starter unit with 6 malonyl-CoA units. YWA1 is then methylated by bfoE at position C-6 to yield foncesin which is further methylated at position C-8 by bfoD to produce fonsecin B. A key enzyme in the biosynthetic pathway is the cytochrome P450 monooxygenase bfoB which catalyzes the oxidative dimerization of fonsecin B to bifonsecin B. Bfob also catalyzes the oxidative dimerization of rubrofusarin B into nigerone. The stereoselectivity of bfoB is influenced by the two natural monomeric substrates; homodimerization of fonsecin B yields a stereochemically pure biaryl, M-foncerine B, while rubrofusarin B yields a mixture of enantiomers M- and P-nigerone. The sequence is that of O-methyltransferase bfoD from Aspergillus brasiliensis (strain CBS 101740 / IMI 381727 / IBT 21946).